The following is a 270-amino-acid chain: 3-phenylpropionate-dihydrodiol/cinnamic acid-dihydrodiol dehydrogenase (270 aa).

An NAD(+)-binding site is contributed by 10–34 (FITGGGSGLGLALVERFIEEGAQVA). Residue Ser-143 participates in substrate binding. Residue Tyr-156 is the Proton acceptor of the active site.

This sequence belongs to the short-chain dehydrogenases/reductases (SDR) family.

The catalysed reaction is 3-(cis-5,6-dihydroxycyclohexa-1,3-dien-1-yl)propanoate + NAD(+) = 3-(2,3-dihydroxyphenyl)propanoate + NADH + H(+). The enzyme catalyses (2E)-3-(cis-5,6-dihydroxycyclohexa-1,3-dien-1-yl)prop-2-enoate + NAD(+) = (2E)-3-(2,3-dihydroxyphenyl)prop-2-enoate + NADH + H(+). It participates in aromatic compound metabolism; 3-phenylpropanoate degradation. Converts 3-phenylpropionate-dihydrodiol (PP-dihydrodiol) and cinnamic acid-dihydrodiol (CI-dihydrodiol) into 3-(2,3-dihydroxylphenyl)propanoic acid (DHPP) and 2,3-dihydroxicinnamic acid (DHCI), respectively. The polypeptide is 3-phenylpropionate-dihydrodiol/cinnamic acid-dihydrodiol dehydrogenase (Shigella sonnei (strain Ss046)).